Here is a 641-residue protein sequence, read N- to C-terminus: Epithelial sodium channel subunit beta (641 aa).

Residues 1–50 (MHVKKYLLKGLHRLQKGPGYTYKELLVWYCDNTNTHGPKRIICEGPKKKA) lie on the Cytoplasmic side of the membrane. A helical membrane pass occupies residues 51-71 (MWFVLTLLFTSLVCWQWGLFI). The Extracellular segment spans residues 72 to 533 (KTYLNWEVSV…GGQFGFWMGG (462 aa)). 9 disulfide bridges follow: C98–C273, C185–C190, C197–C204, C250–C257, C362–C449, C387–C445, C391–C441, C400–C427, and C402–C416. An N-linked (GlcNAc...) asparagine glycan is attached at N141. N-linked (GlcNAc...) asparagine glycosylation occurs at N379. A helical membrane pass occupies residues 534–554 (SVLCLIEFGEIIIDFVWITII). Topologically, residues 555–641 (KLVALAKSVR…IESDSEGDAI (87 aa)) are cytoplasmic. A disordered region spans residues 597–624 (TPGPDVEAYPHEQNPPIPGTPPPNYDSL). The span at 609–620 (QNPPIPGTPPPN) shows a compositional bias: pro residues. The PY motif; recruits WW domain-containing proteins and is thereby required for ubiquitination and inhibition of the channel by NEDD4 and NEDD4L signature appears at 617–621 (PPPNY). Residues S634 and S636 each carry the phosphoserine modification.

It belongs to the amiloride-sensitive sodium channel (TC 1.A.6) family. SCNN1B subfamily. As to quaternary structure, component of the heterotrimeric epithelial sodium channel (ENaC) composed of an alpha/SCNN1A, a beta/SCNN1B and a gamma/SCNN1G subunit. An additional delta/SCNN1D subunit can replace the alpha/SCNN1A subunit to form an alternative channel with specific properties. Interacts with WWP1 (via WW domains). Interacts with WWP2 (via WW domains); inhibits the channel. Interacts with the full-length immature form of PCSK9 (pro-PCSK9). Interacts (N-glycosylated) with BPIFA1; the interaction is direct and inhibits the proteolytic processing of SCNN1A and SCNN1G and the activation of ENaC. Post-translationally, ubiquitinated. Can be ubiquitinated at multiple sites and undergo monoubiquitination and polyubiquitination. Ubiquitination by NEDD4 or NEDD4L inhibits the ENaC channel through endocytosis, intracellular retention and degradation of its individual subunits. However, some studies could not confirm the ubiquitination of this subunit of the ENaC. Phosphorylated on serine and threonine residues. Aldosterone and insulin increase the basal level of phosphorylation. In terms of processing, N-glycosylated. N-glycosylation is required for interaction with BPIFA1.

The protein localises to the apical cell membrane. It is found in the cytoplasmic vesicle membrane. The enzyme catalyses Na(+)(in) = Na(+)(out). Originally identified and characterized by its inhibition by the diuretic drug amiloride. Functionally, this is one of the three pore-forming subunits of the heterotrimeric epithelial sodium channel (ENaC), a critical regulator of sodium balance and fluid homeostasis. ENaC operates in epithelial tissues, where it mediates the electrodiffusion of sodium ions from extracellular fluid through the apical membrane of cells, with water following osmotically. It plays a key role in maintaining sodium homeostasis through electrogenic sodium reabsorption in the kidneys. Additionally, ENaC is essential for airway surface liquid homeostasis, which is crucial for proper mucus clearance. This chain is Epithelial sodium channel subunit beta, found in Bos taurus (Bovine).